We begin with the raw amino-acid sequence, 627 residues long: Transducer protein MpcT (627 aa).

2 helical membrane-spanning segments follow: residues 28–48 (MLTA…LTVF) and 55–75 (LIGV…TYLI). HAMP domains lie at 78–132 (ADFV…VASR) and 192–247 (EQLR…DTIS). The Methyl-accepting transducer domain maps to 266-502 (RVDAVADRSA…DVVGMVEEVA (237 aa)). Glutamate methyl ester (Glu) occurs at positions 310, 416, and 507. 2 disordered regions span residues 505–527 (SEET…DATD) and 557–627 (GTAD…ADSQ). Positions 580-590 (AAAVVDQPQPA) are enriched in low complexity.

This sequence belongs to the methyl-accepting chemotaxis (MCP) protein family. In terms of assembly, interacts with CheA, CheY and CheW1. Post-translationally, methylated by CheR.

The protein localises to the cell membrane. Its function is as follows. Mediates bacteriorhodopsin- and halorhodopsin-dependent photoresponses by detecting membrane potential changes. Probably transduces the signal to the histidine kinase CheA. The sequence is that of Transducer protein MpcT (mpcT) from Halobacterium salinarum (strain ATCC 29341 / DSM 671 / R1).